Consider the following 344-residue polypeptide: Arginine N-succinyltransferase (344 aa).

Position 125 (Leu125) interacts with succinyl-CoA. Residue His229 is the Proton donor of the active site.

Belongs to the arginine N-succinyltransferase family.

The enzyme catalyses succinyl-CoA + L-arginine = N(2)-succinyl-L-arginine + CoA + H(+). Its pathway is amino-acid degradation; L-arginine degradation via AST pathway; L-glutamate and succinate from L-arginine: step 1/5. Its function is as follows. Catalyzes the transfer of succinyl-CoA to arginine to produce N(2)-succinylarginine. The sequence is that of Arginine N-succinyltransferase from Shigella sonnei (strain Ss046).